Reading from the N-terminus, the 310-residue chain is 4-hydroxyproline 2-epimerase (310 aa).

Cys88 serves as the catalytic Proton acceptor. Residues 89-90 (GH), His208, and Asp232 each bind substrate. Catalysis depends on Cys236, which acts as the Proton donor. A substrate-binding site is contributed by 237–238 (GT).

Belongs to the proline racemase family.

The catalysed reaction is trans-4-hydroxy-L-proline = cis-4-hydroxy-D-proline. Catalyzes the epimerization of trans-4-hydroxy-L-proline (t4LHyp) to cis-4-hydroxy-D-proline (c4DHyp). Is likely involved in a degradation pathway that converts t4LHyp to alpha-ketoglutarate. Displays no proline racemase activity. The sequence is that of 4-hydroxyproline 2-epimerase from Burkholderia cenocepacia (strain ATCC BAA-245 / DSM 16553 / LMG 16656 / NCTC 13227 / J2315 / CF5610) (Burkholderia cepacia (strain J2315)).